We begin with the raw amino-acid sequence, 373 residues long: MNEPIMNAPWQPPAGELPAFVSSQPTIGILIDRVRKVYPARKSSAEVVALDDISLTVPKGSILGVIGRSGAGKSTLIRLINGLDKPSSGRVIVNGVEITALSERDLRTARRSIGMVFQHFNLLSSRTAFGNVALPLEIAGTPKAEIEKRVLPLLDMVGLADKRDRYPAELSGGQKQRVGIARALATEPSVLLSDEATSALDPETTDQILELLKQINRDLHLTILFITHEMAVVKALADRVAVIEGGRIVEDGATFDVFATPRHEVTRRFVSSVTGSGAPDWLLEKLQPQQPPGGQAVLRITFKGSDANQPLLSRVSRDLGVNLNILSGQVEMIAGHPFGTLIVSLDAAPEVLRQVIAQLSAGNNLVEQLGYVA.

An ABC transporter domain is found at 29–270 (ILIDRVRKVY…PRHEVTRRFV (242 aa)). 67-74 (GRSGAGKS) provides a ligand contact to ATP.

It belongs to the ABC transporter superfamily. Methionine importer (TC 3.A.1.24) family. The complex is composed of two ATP-binding proteins (MetN), two transmembrane proteins (MetI) and a solute-binding protein (MetQ).

The protein localises to the cell inner membrane. It catalyses the reaction L-methionine(out) + ATP + H2O = L-methionine(in) + ADP + phosphate + H(+). It carries out the reaction D-methionine(out) + ATP + H2O = D-methionine(in) + ADP + phosphate + H(+). Functionally, part of the ABC transporter complex MetNIQ involved in methionine import. Responsible for energy coupling to the transport system. In Rhodopseudomonas palustris (strain ATCC BAA-98 / CGA009), this protein is Methionine import ATP-binding protein MetN 1.